The primary structure comprises 466 residues: Uronate isomerase (466 aa).

The protein belongs to the metallo-dependent hydrolases superfamily. Uronate isomerase family.

The enzyme catalyses D-glucuronate = D-fructuronate. It catalyses the reaction aldehydo-D-galacturonate = keto-D-tagaturonate. The protein operates within carbohydrate metabolism; pentose and glucuronate interconversion. In Brucella suis (strain ATCC 23445 / NCTC 10510), this protein is Uronate isomerase.